The sequence spans 1012 residues: Antigenic heat-stable 120 kDa protein (1012 aa).

Disordered regions lie at residues D1 to P73 and G348 to Q396. Basic and acidic residues predominate over residues E12–E27. Residues S47–S61 are compositionally biased toward low complexity. 3 stretches are compositionally biased toward polar residues: residues G62–P73, G348–Q373, and P380–Q396.

The protein localises to the cytoplasm. The protein is Antigenic heat-stable 120 kDa protein (sca4) of Rickettsia slovaca.